Here is a 426-residue protein sequence, read N- to C-terminus: MSIEVDWKTATSGPDGEALAERIRSFIHDKFQQVALPRFIRSVQVHSFDFGTVPPDLEIKDFCEPFADFYEEDEDDETSEVSEELVSAHGNQWHRTHSELNEPPYRDEVTMNQPLRDPFDEGFHPSPLRSPMEHLNPHFLPRAGTPGIPGGTSTIGYHLMSLGGLSGTQTPLAAVAGGTPFANGWTDHNLGPGNRGHASGPAAGAMRQHRPEDIDSSNPTSRPSTSSTLPSHPSGSNRNSGDGSHPEEEHLDDPAEPDHPFRFPKMRERRPEDFQVMCRAKYAGDVRLSLTAEILLDYPMPSFVGLPLKLNITGVTFDGVAVVAYIRKRVNFCFLSAEDADALIGADDQETRDKDDHPRSGLDPTTSPKRQGGLLREIRVESEIGRKEDGKQVLKNVGKVERFVLAQVRRIFEEELVFPSFWTFLI.

Positions 1–426 constitute an SMP-LTD domain; the sequence is MSIEVDWKTA…VFPSFWTFLI (426 aa). 3 disordered regions span residues 88–147, 185–264, and 346–370; these read AHGN…GTPG, WTDH…FRFP, and ADDQETRDKDDHPRSGLDPTTSPKR. A compositionally biased stretch (basic and acidic residues) spans 96–109; sequence THSELNEPPYRDEV. Over residues 216-236 the composition is skewed to low complexity; that stretch reads SSNPTSRPSTSSTLPSHPSGS. 2 stretches are compositionally biased toward basic and acidic residues: residues 244-264 and 349-360; these read SHPEEEHLDDPAEPDHPFRFP and QETRDKDDHPRS.

This sequence belongs to the MDM12 family. In terms of assembly, component of the ER-mitochondria encounter structure (ERMES) or MDM complex, composed of mmm1, mdm10, mdm12 and mdm34. A mmm1 homodimer associates with one molecule of mdm12 on each side in a pairwise head-to-tail manner, and the SMP-LTD domains of mmm1 and mdm12 generate a continuous hydrophobic tunnel for phospholipid trafficking.

The protein localises to the mitochondrion outer membrane. It localises to the endoplasmic reticulum membrane. Component of the ERMES/MDM complex, which serves as a molecular tether to connect the endoplasmic reticulum (ER) and mitochondria. Components of this complex are involved in the control of mitochondrial shape and protein biogenesis, and function in nonvesicular lipid trafficking between the ER and mitochondria. Mdm12 is required for the interaction of the ER-resident membrane protein mmm1 and the outer mitochondrial membrane-resident beta-barrel protein mdm10. The mdm12-mmm1 subcomplex functions in the major beta-barrel assembly pathway that is responsible for biogenesis of all mitochondrial outer membrane beta-barrel proteins, and acts in a late step after the SAM complex. The mdm10-mdm12-mmm1 subcomplex further acts in the TOM40-specific pathway after the action of the mdm12-mmm1 complex. Essential for establishing and maintaining the structure of mitochondria and maintenance of mtDNA nucleoids. The protein is Mitochondrial distribution and morphology protein 12 of Aspergillus terreus (strain NIH 2624 / FGSC A1156).